Here is a 229-residue protein sequence, read N- to C-terminus: Putative N-acetylmannosamine-6-phosphate 2-epimerase (229 aa).

The protein belongs to the NanE family.

The catalysed reaction is an N-acyl-D-glucosamine 6-phosphate = an N-acyl-D-mannosamine 6-phosphate. It participates in amino-sugar metabolism; N-acetylneuraminate degradation; D-fructose 6-phosphate from N-acetylneuraminate: step 3/5. Converts N-acetylmannosamine-6-phosphate (ManNAc-6-P) to N-acetylglucosamine-6-phosphate (GlcNAc-6-P). The sequence is that of Putative N-acetylmannosamine-6-phosphate 2-epimerase from Haemophilus ducreyi (strain 35000HP / ATCC 700724).